Here is a 78-residue protein sequence, read N- to C-terminus: Putative antitoxin VapB4 (78 aa).

Belongs to the UPF0330 family.

In terms of biological role, possibly the antitoxin component of a type II toxin-antitoxin (TA) system. Its cognate toxin is VapC4 (Potential). This chain is Putative antitoxin VapB4 (vapB4), found in Pyrococcus furiosus (strain ATCC 43587 / DSM 3638 / JCM 8422 / Vc1).